A 65-amino-acid polypeptide reads, in one-letter code: Large ribosomal subunit protein bL35 (65 aa).

Residues 1–28 form a disordered region; sequence MPKMKTHRGAAKRFKKTGTGKIKRGQSK.

It belongs to the bacterial ribosomal protein bL35 family.

The chain is Large ribosomal subunit protein bL35 from Acidobacterium capsulatum (strain ATCC 51196 / DSM 11244 / BCRC 80197 / JCM 7670 / NBRC 15755 / NCIMB 13165 / 161).